Here is an 82-residue protein sequence, read N- to C-terminus: Diphthamide biosynthesis protein 3 (82 aa).

One can recognise a DPH-type MB domain in the interval 4 to 60; that stretch reads FHDEVEIEDFQYDEDSETYFYPCPCGDNFAITKEDLENGEDVATCPSCSLIIKVIYD. Fe cation is bound by residues cysteine 26, cysteine 28, cysteine 48, and cysteine 51.

This sequence belongs to the DPH3 family. In terms of assembly, component of the 2-(3-amino-3-carboxypropyl)histidine synthase complex composed of DPH1, DPH2, DPH3 and a NADH-dependent reductase. Interacts with SERGEF. The cofactor is Fe(2+). Widely expressed with highest levels in heart, liver, kidney and testis.

Its subcellular location is the cytoplasm. It is found in the nucleus. The enzyme catalyses [3Fe-4S](1+)-[protein] + Fe(2+)-[Dph3] = [3Fe-4S](0)-[protein] + Fe(3+)-[Dph3]. It catalyses the reaction 2 [3Fe-4S](0)-[protein] + 2 Fe(2+)-[Dph3] + NADH = 2 [4Fe-4S](1+)-[protein] + 2 [Dph3] + NAD(+) + H(+). Its pathway is protein modification; peptidyl-diphthamide biosynthesis. Functionally, required for the first step of diphthamide biosynthesis, a post-translational modification of histidine which occurs in elongation factor 2. DPH1 and DPH2 transfer a 3-amino-3-carboxypropyl (ACP) group from S-adenosyl-L-methionine (SAM) to a histidine residue, the reaction is assisted by a reduction system comprising DPH3 and a NADH-dependent reductase. Acts as an electron donor to reduce the Fe-S cluster in DPH1-DPH2 keeping the [4Fe-4S] clusters in the active and reduced state. Restores iron to DPH1-DPH2 iron-sulfur clusters which have degraded from [4Fe-4S] to [3Fe-4S] by donating an iron atom to reform [4Fe-4S] clusters, in a manner dependent on the presence of elongation factor 2 and SAM. Associates with the elongator complex and is required for tRNA Wobble base modifications mediated by the elongator complex. The elongator complex is required for multiple tRNA modifications, including mcm5U (5-methoxycarbonylmethyl uridine), mcm5s 2U (5-methoxycarbonylmethyl-2-thiouridine), and ncm5U (5-carbamoylmethyl uridine). In Mus musculus (Mouse), this protein is Diphthamide biosynthesis protein 3.